We begin with the raw amino-acid sequence, 256 residues long: MHPQDASTEQTPVDDDQVESSQPVHAPEDVAHPRRIRSFVRRAGRTSSGQQRAIDEVGPRLIVPYAPHPLDWEAAFGRKAPAILEIGFGMGETTAHIAQLRPQDNFLGCEVHEPGVGALLKLADEREIGNIRIIQHDAVEVVAHMLTEDCLDGVHIYFPDPWHKKRHNKRRLVQPPLVKLLASRLKPGGYIHCATDWEEYAHQMVEVLAGEPALENASSAADGFSERPEYRPITKFERRGVRLGHGVWDVVFRKRG.

Positions Met-1–Thr-11 are enriched in polar residues. The disordered stretch occupies residues Met-1–Arg-35. Residues Glu-85, Glu-110, Asp-137, and Asp-160 each contribute to the S-adenosyl-L-methionine site. The active site involves Asp-160. Lys-164 contacts substrate. The segment at Arg-166 to Arg-171 is interaction with RNA. Substrate is bound by residues Asp-196 and Thr-234–Glu-237.

The protein belongs to the class I-like SAM-binding methyltransferase superfamily. TrmB family.

The catalysed reaction is guanosine(46) in tRNA + S-adenosyl-L-methionine = N(7)-methylguanosine(46) in tRNA + S-adenosyl-L-homocysteine. It participates in tRNA modification; N(7)-methylguanine-tRNA biosynthesis. Its function is as follows. Catalyzes the formation of N(7)-methylguanine at position 46 (m7G46) in tRNA. This Cupriavidus pinatubonensis (strain JMP 134 / LMG 1197) (Cupriavidus necator (strain JMP 134)) protein is tRNA (guanine-N(7)-)-methyltransferase.